Here is a 188-residue protein sequence, read N- to C-terminus: Ribosome-recycling factor (188 aa).

Belongs to the RRF family.

The protein localises to the cytoplasm. Functionally, responsible for the release of ribosomes from messenger RNA at the termination of protein biosynthesis. May increase the efficiency of translation by recycling ribosomes from one round of translation to another. In Caulobacter vibrioides (strain NA1000 / CB15N) (Caulobacter crescentus), this protein is Ribosome-recycling factor.